The primary structure comprises 623 residues: Keratin, type I cytoskeletal 9 (623 aa).

Residues Met-1 to Arg-13 show a composition bias toward low complexity. A disordered region spans residues Met-1 to Gly-25. The segment at Met-1–Asn-152 is head. Phosphoserine is present on residues Ser-14 and Ser-57. Residues Ser-14–Gly-25 show a composition bias toward gly residues. The tract at residues Glu-153–Trp-188 is coil 1A. The IF rod domain occupies Glu-153 to Phe-465. The tract at residues Tyr-189–Thr-207 is linker 1. A coil 1B region spans residues Ile-208 to Leu-299. A linker 12 region spans residues Thr-300–Thr-322. The segment at Leu-323–Gly-461 is coil 2. 2 disordered regions span residues Gln-462 to Ser-496 and Tyr-534 to Ser-623. The tract at residues Gln-462 to Ser-623 is tail. Gly residues predominate over residues Gly-471–Ser-496.

This sequence belongs to the intermediate filament family. As to quaternary structure, heterotetramer of two type I and two type II keratins. Expressed in the terminally differentiated epidermis of palms and soles.

Functionally, may serve an important special function either in the mature palmar and plantar skin tissue or in the morphogenetic program of the formation of these tissues. Plays a role in keratin filament assembly. In Homo sapiens (Human), this protein is Keratin, type I cytoskeletal 9 (KRT9).